Reading from the N-terminus, the 127-residue chain is MSEKIDQIVEELKTLTLLEASELVSKIEETFDVDASASVGGGMMMAGPAVVEEVEEKTEFDVMLDEVPADKKIAVLKVVRSLTGLGLKEAKELVESAPKQIQEGVAKDAAEEAKKQIEDAGGKASLK.

Residues 104 to 127 are disordered; it reads GVAKDAAEEAKKQIEDAGGKASLK. Residues 105–121 are compositionally biased toward basic and acidic residues; the sequence is VAKDAAEEAKKQIEDAG.

This sequence belongs to the bacterial ribosomal protein bL12 family. As to quaternary structure, homodimer. Part of the ribosomal stalk of the 50S ribosomal subunit. Forms a multimeric L10(L12)X complex, where L10 forms an elongated spine to which 2 to 4 L12 dimers bind in a sequential fashion. Binds GTP-bound translation factors.

Its subcellular location is the plastid. It is found in the chloroplast. Functionally, forms part of the ribosomal stalk which helps the ribosome interact with GTP-bound translation factors. Is thus essential for accurate translation. In Trieres chinensis (Marine centric diatom), this protein is Large ribosomal subunit protein bL12c.